Here is a 414-residue protein sequence, read N- to C-terminus: Transcription factor FAMA (414 aa).

Disordered stretches follow at residues 1 to 61 and 142 to 197; these read MDKD…TPFD and KEDQ…SQRM. 2 stretches are compositionally biased toward low complexity: residues 12 to 24 and 35 to 49; these read GESSGGNDDNSSG and QQQQKQSMPQQQQHQ. Positions 166–175 are enriched in basic and acidic residues; it reads RENKNVTKKE. Residues 176 to 185 show a composition bias toward basic residues; it reads VKSKRKRART. The segment covering 187-197 has biased composition (basic and acidic residues); it reads KTSEEVESQRM. In terms of domain architecture, bHLH spans 194-245; that stretch reads SQRMTHIAVERNRRKQMNEHLRVLRSLMPGSYVQRGDQASIIGGAIEFVREL. The LxCxE motif motif lies at 249 to 253; sequence LQCLE.

Interacts with FAMA through its LxCxE motif. Self-interacts. Also interacts with bHLH071 and bHLH093. Interacts with RBR1. Resctricted to stomatal cell lineages (at protein level). Expressed in roots, leaves, stems, and flowers.

The protein localises to the nucleus. Its function is as follows. Transcription activator. Together with MYB88 and MYB124, ensures that stomata contain just two guard cells (GCs) by enforcing a single symmetric precursor cell division before stomatal maturity. Together with SPCH and MUTE, regulates the stomata formation. Required to promote differentiation and morphogenesis of stomatal guard cells and to halt proliferative divisions in their immediate precursors. Mediates the formation of stomata. Prevents histone H3K27me3 marks and derepresses stem cell gene expression. The polypeptide is Transcription factor FAMA (FAMA) (Arabidopsis thaliana (Mouse-ear cress)).